A 127-amino-acid polypeptide reads, in one-letter code: Fluoride-specific ion channel FluC (127 aa).

Helical transmembrane passes span 4–24 (FSILGFIALGGAIGACSRYLV), 38–58 (YGTLTVNVVGSFIMGLLIAAF), 71–91 (VIGLGFLGALTTFSTFSMDNV), and 104–124 (LNILLNVVLSISAAWIGFQLL). Residues Gly78 and Thr81 each contribute to the Na(+) site.

This sequence belongs to the fluoride channel Fluc/FEX (TC 1.A.43) family.

It is found in the cell inner membrane. The catalysed reaction is fluoride(in) = fluoride(out). Na(+) is not transported, but it plays an essential structural role and its presence is essential for fluoride channel function. Its function is as follows. Fluoride-specific ion channel. Important for reducing fluoride concentration in the cell, thus reducing its toxicity. The polypeptide is Fluoride-specific ion channel FluC (Vibrio parahaemolyticus serotype O3:K6 (strain RIMD 2210633)).